A 101-amino-acid polypeptide reads, in one-letter code: Replication restart protein PriB (101 aa).

Residues 1 to 101 (MATNHLVLSG…LHAENVELKT (101 aa)) enclose the SSB domain.

Belongs to the PriB family. As to quaternary structure, homodimer. Interacts with PriA and DnaT. Component of the replication restart primosome. Primosome assembly occurs via a 'hand-off' mechanism. PriA binds to replication forks, subsequently PriB then DnaT bind; DnaT then displaces ssDNA to generate the helicase loading substrate.

Functionally, involved in the restart of stalled replication forks, which reloads the replicative helicase on sites other than the origin of replication; the PriA-PriB pathway is the major replication restart pathway. During primosome assembly it facilitates complex formation between PriA and DnaT on DNA; stabilizes PriA on DNA. Stimulates the DNA unwinding activity of PriA helicase. The sequence is that of Replication restart protein PriB from Shewanella woodyi (strain ATCC 51908 / MS32).